The chain runs to 88 residues: Translation initiation factor IF-1 1 (88 aa).

Residues methionine 1–proline 72 enclose the S1-like domain. Positions arginine 66–arginine 88 are disordered.

The protein belongs to the IF-1 family. In terms of assembly, component of the 30S ribosomal translation pre-initiation complex which assembles on the 30S ribosome in the order IF-2 and IF-3, IF-1 and N-formylmethionyl-tRNA(fMet); mRNA recruitment can occur at any time during PIC assembly.

Its subcellular location is the cytoplasm. Its function is as follows. One of the essential components for the initiation of protein synthesis. Stabilizes the binding of IF-2 and IF-3 on the 30S subunit to which N-formylmethionyl-tRNA(fMet) subsequently binds. Helps modulate mRNA selection, yielding the 30S pre-initiation complex (PIC). Upon addition of the 50S ribosomal subunit IF-1, IF-2 and IF-3 are released leaving the mature 70S translation initiation complex. This is Translation initiation factor IF-1 1 from Chromobacterium violaceum (strain ATCC 12472 / DSM 30191 / JCM 1249 / CCUG 213 / NBRC 12614 / NCIMB 9131 / NCTC 9757 / MK).